The following is a 654-amino-acid chain: MSEKVGAMGGNKGGAFDDGVFDGVKKVIVGKDFNNVTYIKVEYEKDGKFEIREHGTNRGQLKEFSVDYPNEYITAVGGSYDTVFGYGSALIKSLLFKTSYGRTSPILGHTTLLGNPAGKEFMLESKYGGKLLGFHGRSGEALDAIGPHFFAVNSSLKHFKPQGGNGGSAWDDGAFDGVRKVLVGRNGKFVSYIRFEYAKGERTVPHAHGKRQEAPQEFVVDYPNEHITSVEGTIDGYLSSLKFKTSKGRTSPVFGNVVGSKFVFEETSFKLVGFCGRSGDAIDALGAHFAPLPAPTPAPAPAPAPVPVPAPAPVPAPSPAPAPSPAPAPAPAPAPAPTPAPAPAPPNKVEALGGNGGTIFDDGAFDHVRKVYIGQGDSGVAYVKFEYEKDGKRETGEHGKMTVLGTEEFEVESDDYITSAEVSVDNVFGFKSEIVTSLVFKTFKGITSQPFGMESEKKLELKDGKGGKLVGFHGKASDVLYALGAYFAPTTNSITPSTPSTAKKLQARGGNGGASWDDGVFDGVRKILVGQGNDGVAFVTFEYNKGSQAILGDGHGKQTLLGTETFELDYPSEYITSVEGYYDKIFGVEAEVVTSLTFKTNKRTSQPFGMTAGEHFELKEDGYKIVGFHGKAGDLVHQIGVHAVPIFTNYRCVF.

Jacalin-type lectin domains lie at 2-151 (SEKV…HFFA), 156-291 (LKHF…HFAP), 346-489 (PNKV…YFAP), and 502-645 (AKKL…HAVP). The span at 314–346 (VPAPSPAPAPSPAPAPAPAPAPAPTPAPAPAPP) shows a compositional bias: pro residues. The disordered stretch occupies residues 314 to 355 (VPAPSPAPAPSPAPAPAPAPAPAPTPAPAPAPPNKVEALGGN).

Belongs to the jacalin lectin family. Expressed in flowers. Detected mainly in ovules and styles of immature flowers, but also in pistils, styles, stamens, petals and embryos. Not detected in leaves.

In Arabidopsis thaliana (Mouse-ear cress), this protein is Myrosinase-binding protein 2 (MBP2).